The chain runs to 160 residues: UPF0178 protein BPP1051 (160 aa).

The protein belongs to the UPF0178 family.

This is UPF0178 protein BPP1051 from Bordetella parapertussis (strain 12822 / ATCC BAA-587 / NCTC 13253).